The chain runs to 129 residues: Glycine cleavage system H protein (129 aa).

One can recognise a Lipoyl-binding domain in the interval 22–103 (TGTVGITDYA…AHTAWIMKIE (82 aa)). N6-lipoyllysine is present on lysine 63.

This sequence belongs to the GcvH family. As to quaternary structure, the glycine cleavage system is composed of four proteins: P, T, L and H. (R)-lipoate serves as cofactor.

Functionally, the glycine cleavage system catalyzes the degradation of glycine. The H protein shuttles the methylamine group of glycine from the P protein to the T protein. The protein is Glycine cleavage system H protein of Acidobacterium capsulatum (strain ATCC 51196 / DSM 11244 / BCRC 80197 / JCM 7670 / NBRC 15755 / NCIMB 13165 / 161).